Reading from the N-terminus, the 399-residue chain is Dof zinc finger protein DOF5.1 (399 aa).

The Dof-type zinc-finger motif lies at 95–149 (LKCPRCDSTNTKFCYFNNYSLTQPRHFCKACRRYWTRGGALRSVPVGGGCRRNKR). Residues C97, C100, C122, and C125 each coordinate Zn(2+). The tract at residues 139–176 (PVGGGCRRNKRTKNSSGGGGGSTSSGNSKSQDSATSND) is disordered.

As to expression, expressed ubiquitously, especially in the vascular tissues, except in seeds, petals and anthers. Specific to the vascular tissues in young leaves, cotyledons and flower buds. The PEAR proteins (e.g. DOF2.4, DOF5.1, DOF3.2, DOF1.1, DOF5.6 and DOF5.3) form a short-range concentration gradient that peaks at protophloem sieve elements (PSE).

Its subcellular location is the nucleus. Transcription factor that binds specifically to a 5'-AA[AG]G-3' consensus core sequence. Binds to 5'-TAAAGT-3' motif in REV promoter to triggers its transcription, thus regulating adaxial-abaxial polarity and influencing leaf axial patterning in an auxin transport- and response-dependent manner (e.g. IAA6 and IAA19 genes expression). Probably involved in early processes for vascular development. The PEAR proteins (e.g. DOF2.4, DOF5.1, DOF3.2, DOF1.1, DOF5.6 and DOF5.3) activate gene expression that promotes radial growth of protophloem sieve elements. The protein is Dof zinc finger protein DOF5.1 of Arabidopsis thaliana (Mouse-ear cress).